The chain runs to 659 residues: Threonine--tRNA ligase (659 aa).

In terms of domain architecture, TGS spans 1 to 61; sequence MIDLIFPDGS…TPDLLGGGNR (61 aa). A catalytic region spans residues 249–541; it reads DHRKLGKTMD…LLENYAGHLP (293 aa). Residues cysteine 341, histidine 392, and histidine 518 each coordinate Zn(2+). The disordered stretch occupies residues 637 to 659; the sequence is EEATPPDLARDRAVAAPAELAQA.

It belongs to the class-II aminoacyl-tRNA synthetase family. In terms of assembly, homodimer. The cofactor is Zn(2+).

It localises to the cytoplasm. The catalysed reaction is tRNA(Thr) + L-threonine + ATP = L-threonyl-tRNA(Thr) + AMP + diphosphate + H(+). Functionally, catalyzes the attachment of threonine to tRNA(Thr) in a two-step reaction: L-threonine is first activated by ATP to form Thr-AMP and then transferred to the acceptor end of tRNA(Thr). Also edits incorrectly charged L-seryl-tRNA(Thr). In Caulobacter sp. (strain K31), this protein is Threonine--tRNA ligase.